The chain runs to 288 residues: MMRILLFLATNFAVLFVFNIILTLTGIQRQDAVGLLIFATLFGFTGSIISLLMSKSMALRSVNGQVIEQPRNETEHWLLQTVHSQAERAGLPMPTVAIYHSADVNAFATGATKKNSLVAVSTGLLNAMTRDEAEAVLAHEVSHIKSGDMVTMTLLQGVLNTFVIFISRMLAKVVATDRDGNTSQGIYFMISMVLELVFGVLASMIAMWFSRYREFKADAGSAELVGKHKMIAALQRLKTLHEPQEMEGQLAAFAINGKRGGLASLFLSHPPLEKRIEALRNLDSLNGK.

Transmembrane regions (helical) follow at residues 4 to 24 (ILLF…ILTL) and 33 to 53 (VGLL…SLLM). His139 lines the Zn(2+) pocket. The active site involves Glu140. His143 serves as a coordination point for Zn(2+). Helical transmembrane passes span 146–166 (SGDM…VIFI) and 186–206 (IYFM…SMIA). Glu214 provides a ligand contact to Zn(2+).

Belongs to the peptidase M48B family. Zn(2+) is required as a cofactor.

It localises to the cell inner membrane. This is Protease HtpX from Histophilus somni (strain 2336) (Haemophilus somnus).